Here is a 109-residue protein sequence, read N- to C-terminus: UPF0122 protein BH2485 (109 aa).

The protein belongs to the UPF0122 family.

In terms of biological role, might take part in the signal recognition particle (SRP) pathway. This is inferred from the conservation of its genetic proximity to ftsY/ffh. May be a regulatory protein. This Halalkalibacterium halodurans (strain ATCC BAA-125 / DSM 18197 / FERM 7344 / JCM 9153 / C-125) (Bacillus halodurans) protein is UPF0122 protein BH2485.